A 137-amino-acid chain; its full sequence is Photosystem II reaction center W protein, chloroplastic (137 aa).

Residues 1–64 (MATITASSSA…ETTTTTNKSM (64 aa)) constitute a chloroplast transit peptide. A thylakoid-targeting transit peptide spans 65–83 (GASLLAAAAAATISNPAMA). Residues 84–103 (LVDERMSTEGTGLPFGLSNN) lie on the Lumenal, thylakoid side of the membrane. Residues 104 to 123 (LLGWILFGVFGLIWALYFVY) traverse the membrane as a helical segment. Over 124-137 (ASGLEEDEESGLSL) the chain is Stromal.

As to quaternary structure, part of the photosystem II complex. PSII is composed of 1 copy each of membrane proteins PsbA, PsbB, PsbC, PsbD, numerous small proteins, at least 3 peripheral proteins of the oxygen-evolving complex and a large number of cofactors. It forms dimeric complexes.

The protein localises to the plastid. Its subcellular location is the chloroplast thylakoid membrane. Its function is as follows. Stabilizes dimeric photosystem II (PSII). In its absence no dimeric PSII accumulates and there is a reduction of monomeric PSII. The protein is Photosystem II reaction center W protein, chloroplastic of Spinacia oleracea (Spinach).